The sequence spans 109 residues: Nucleoid-associated protein Cvib_1034 (109 aa).

This sequence belongs to the YbaB/EbfC family. Homodimer.

The protein resides in the cytoplasm. It localises to the nucleoid. Its function is as follows. Binds to DNA and alters its conformation. May be involved in regulation of gene expression, nucleoid organization and DNA protection. The chain is Nucleoid-associated protein Cvib_1034 from Chlorobium phaeovibrioides (strain DSM 265 / 1930) (Prosthecochloris vibrioformis (strain DSM 265)).